An 808-amino-acid polypeptide reads, in one-letter code: Protein SEY1 (808 aa).

The tract at residues 1 to 21 (MSSELSEGELSHTSSSSSFVP) is disordered. Residues 1-701 (MSSELSEGEL…KRSIVQHITQ (701 aa)) are Cytoplasmic-facing. Residues 57-286 (GNNYHIISVF…VGDELFKPEY (230 aa)) form the GB1/RHD3-type G domain. 67–74 (GSQSTGKS) lines the GTP pocket. A helical transmembrane segment spans residues 702–722 (IPYYIYLVIVFLGWNEFMAII). Residues 723 to 725 (RNP) are Lumenal-facing. Residues 726-746 (LLFSLALLLGASVYILYKLNL) form a helical membrane-spanning segment. The Cytoplasmic segment spans residues 747-808 (LKPAIVVAQR…YSDNIELDDM (62 aa)).

The protein belongs to the TRAFAC class dynamin-like GTPase superfamily. GB1/RHD3 GTPase family. RHD3 subfamily.

The protein localises to the endoplasmic reticulum membrane. Its function is as follows. Cooperates with the reticulon proteins and tubule-shaping DP1 family proteins to generate and maintain the structure of the tubular endoplasmic reticulum network. Has GTPase activity, which is required for its function in ER organization. In Candida tropicalis (strain ATCC MYA-3404 / T1) (Yeast), this protein is Protein SEY1.